Consider the following 278-residue polypeptide: 4-deoxy-L-threo-5-hexosulose-uronate ketol-isomerase (278 aa).

Residues His196, His198, Glu203, and His245 each coordinate Zn(2+).

The protein belongs to the KduI family. Requires Zn(2+) as cofactor.

It catalyses the reaction 5-dehydro-4-deoxy-D-glucuronate = 3-deoxy-D-glycero-2,5-hexodiulosonate. It participates in glycan metabolism; pectin degradation; 2-dehydro-3-deoxy-D-gluconate from pectin: step 4/5. Catalyzes the isomerization of 5-dehydro-4-deoxy-D-glucuronate to 3-deoxy-D-glycero-2,5-hexodiulosonate. The polypeptide is 4-deoxy-L-threo-5-hexosulose-uronate ketol-isomerase (Salmonella typhimurium (strain LT2 / SGSC1412 / ATCC 700720)).